The sequence spans 475 residues: Protein nucleotidyltransferase YdiU (475 aa).

ATP contacts are provided by G82, G84, R85, K105, D117, G118, R168, and R175. Catalysis depends on D240, which acts as the Proton acceptor. Mg(2+) is bound by residues N241 and D250. Residue D250 participates in ATP binding.

The protein belongs to the SELO family. Mg(2+) serves as cofactor. The cofactor is Mn(2+).

The catalysed reaction is L-seryl-[protein] + ATP = 3-O-(5'-adenylyl)-L-seryl-[protein] + diphosphate. It carries out the reaction L-threonyl-[protein] + ATP = 3-O-(5'-adenylyl)-L-threonyl-[protein] + diphosphate. It catalyses the reaction L-tyrosyl-[protein] + ATP = O-(5'-adenylyl)-L-tyrosyl-[protein] + diphosphate. The enzyme catalyses L-histidyl-[protein] + UTP = N(tele)-(5'-uridylyl)-L-histidyl-[protein] + diphosphate. The catalysed reaction is L-seryl-[protein] + UTP = O-(5'-uridylyl)-L-seryl-[protein] + diphosphate. It carries out the reaction L-tyrosyl-[protein] + UTP = O-(5'-uridylyl)-L-tyrosyl-[protein] + diphosphate. In terms of biological role, nucleotidyltransferase involved in the post-translational modification of proteins. It can catalyze the addition of adenosine monophosphate (AMP) or uridine monophosphate (UMP) to a protein, resulting in modifications known as AMPylation and UMPylation. The protein is Protein nucleotidyltransferase YdiU of Aeromonas hydrophila subsp. hydrophila (strain ATCC 7966 / DSM 30187 / BCRC 13018 / CCUG 14551 / JCM 1027 / KCTC 2358 / NCIMB 9240 / NCTC 8049).